The sequence spans 144 residues: Peptide methionine sulfoxide reductase B7 (144 aa).

Positions 19–140 (DEEWRAVLSP…NSVSLKFSSA (122 aa)) constitute a MsrB domain. 4 residues coordinate Zn(2+): C58, C61, C104, and C107. C76 and C129 are oxidised to a cystine. The active-site Nucleophile is C129.

Belongs to the MsrB Met sulfoxide reductase family. The cofactor is Zn(2+).

Its subcellular location is the cytoplasm. It is found in the cytosol. It catalyses the reaction L-methionyl-[protein] + [thioredoxin]-disulfide + H2O = L-methionyl-(R)-S-oxide-[protein] + [thioredoxin]-dithiol. Functionally, catalyzes the reduction of methionine sulfoxide (MetSO) to methionine in proteins. Plays a protective role against oxidative stress by restoring activity to proteins that have been inactivated by methionine oxidation. MSRB family specifically reduces the MetSO R-enantiomer. The protein is Peptide methionine sulfoxide reductase B7 (MSRB7) of Arabidopsis thaliana (Mouse-ear cress).